Here is a 160-residue protein sequence, read N- to C-terminus: Lipoprotein signal peptidase (160 aa).

The next 3 membrane-spanning stretches (helical) occupy residues 13–33, 72–92, and 104–124; these read IYIT…HLII, WFLS…ITKL, and SLII…GFVV. Active-site residues include Asp125 and Asp143. Residues 134 to 154 traverse the membrane as a helical segment; sequence WHFATFNIADCSIFIGIIILM.

This sequence belongs to the peptidase A8 family.

It is found in the cell inner membrane. The enzyme catalyses Release of signal peptides from bacterial membrane prolipoproteins. Hydrolyzes -Xaa-Yaa-Zaa-|-(S,diacylglyceryl)Cys-, in which Xaa is hydrophobic (preferably Leu), and Yaa (Ala or Ser) and Zaa (Gly or Ala) have small, neutral side chains.. It functions in the pathway protein modification; lipoprotein biosynthesis (signal peptide cleavage). This protein specifically catalyzes the removal of signal peptides from prolipoproteins. This Buchnera aphidicola subsp. Acyrthosiphon pisum (strain Tuc7) protein is Lipoprotein signal peptidase.